A 369-amino-acid chain; its full sequence is Variable large protein 7 (369 aa).

The N-terminal stretch at 1 to 26 (MRKRISAIINKLNISIIIMTVVLMIG) is a signal peptide. A lipid anchor (N-palmitoyl cysteine) is attached at Cys27. Cys27 carries the S-diacylglycerol cysteine lipid modification.

It belongs to the variable large protein (Vlp) family. Alpha subfamily.

It localises to the cell outer membrane. Its function is as follows. The Vlp and Vsp proteins are antigenically distinct proteins, only one vlp or vsp gene is transcriptionally active at any one time. Switching between these genes is a mechanism of host immune response evasion. This is Variable large protein 7 from Borrelia hermsii.